The sequence spans 239 residues: Proteasome activator complex subunit 2 (239 aa).

Ala-2 is modified (N-acetylalanine). Phosphoserine is present on Ser-10.

The protein belongs to the PA28 family. In terms of assembly, heterodimer of PSME1 and PSME2, which forms a hexameric ring.

Implicated in immunoproteasome assembly and required for efficient antigen processing. The PA28 activator complex enhances the generation of class I binding peptides by altering the cleavage pattern of the proteasome. This chain is Proteasome activator complex subunit 2 (PSME2), found in Homo sapiens (Human).